Consider the following 906-residue polypeptide: ATP-dependent DNA helicase DDX11 (906 aa).

The Helicase ATP-binding domain maps to 9–442 (GGIHFPFPFP…KNLMYIKQIL (434 aa)). Residue 44-51 (SPTGTGKS) participates in ATP binding. The disordered stretch occupies residues 78-111 (APGSGPPSSEKNSLLTSSSCQEPTDTPRPAGEPD). The span at 85–96 (SSEKNSLLTSSS) shows a compositional bias: low complexity. Serine 260 carries the post-translational modification Phosphoserine. Cysteine 265 and cysteine 283 together coordinate [4Fe-4S] cluster. Positions 284-301 (VDMQRSKREKNGTGEDKP) are enriched in basic and acidic residues. The interval 284–310 (VDMQRSKREKNGTGEDKPKRKRQKIQT) is disordered. [4Fe-4S] cluster is bound by residues cysteine 312 and cysteine 347. Residues 390 to 393 (DEAH) carry the DEAH box motif.

Belongs to the DEAD box helicase family. DEAH subfamily. DDX11/CHL1 sub-subfamily. In terms of assembly, associates with the CTF18-RFC complex. Associates with a cohesin complex composed of RAD21, SMC1 proteins and SMC3. Interacts with CHTF18. Interacts with DSCC1. Interacts with FEN1; this interaction is direct and increases flap endonuclease activity of FEN1. Interacts with PCNA. Interacts with POLR1A and UBTF. Interacts with RAD21, SMC1 proteins and SMC3. Interacts with RFC2. Interacts with TIMELESS; this interaction increases recruitment of both proteins onto chromatin in response to replication stress induction by hydroxyurea. [4Fe-4S] cluster is required as a cofactor.

The protein resides in the nucleus. It localises to the nucleolus. Its subcellular location is the cytoplasm. The protein localises to the cytoskeleton. It is found in the spindle pole. The protein resides in the midbody. It localises to the microtubule organizing center. Its subcellular location is the centrosome. The enzyme catalyses Couples ATP hydrolysis with the unwinding of duplex DNA at the replication fork by translocating in the 5'-3' direction. This creates two antiparallel DNA single strands (ssDNA). The leading ssDNA polymer is the template for DNA polymerase III holoenzyme which synthesizes a continuous strand.. It catalyses the reaction ATP + H2O = ADP + phosphate + H(+). Functionally, DNA-dependent ATPase and ATP-dependent DNA helicase that participates in various functions in genomic stability, including DNA replication, DNA repair and heterochromatin organization as well as in ribosomal RNA synthesis. Its double-stranded DNA helicase activity requires either a minimal 5'-single-stranded tail length of approximately 15 nt (flap substrates) or 10 nt length single-stranded gapped DNA substrates of a partial duplex DNA structure for helicase loading and translocation along DNA in a 5' to 3' direction. The helicase activity is capable of displacing duplex regions up to 100 bp, which can be extended up to 500 bp by the replication protein A (RPA) or the cohesion CTF18-replication factor C (Ctf18-RFC) complex activities. Also shows ATPase- and helicase activities on substrates that mimic key DNA intermediates of replication, repair and homologous recombination reactions, including forked duplex, anti-parallel G-quadruplex and three-stranded D-loop DNA molecules. Plays a role in DNA double-strand break (DSB) repair at the DNA replication fork during DNA replication recovery from DNA damage. Recruited with TIMELESS factor upon DNA-replication stress response at DNA replication fork to preserve replication fork progression, and hence ensure DNA replication fidelity. Also cooperates with TIMELESS factor during DNA replication to regulate proper sister chromatid cohesion and mitotic chromosome segregation. Stimulates 5'-single-stranded DNA flap endonuclease activity of FEN1 in an ATP- and helicase-independent manner; and hence it may contribute in Okazaki fragment processing at DNA replication fork during lagging strand DNA synthesis. Its ability to function at DNA replication fork is modulated by its binding to long non-coding RNA (lncRNA) cohesion regulator non-coding RNA DDX11-AS1/CONCR, which is able to increase both DDX11 ATPase activity and binding to DNA replicating regions. Also plays a role in heterochromatin organization. Involved in rRNA transcription activation through binding to active hypomethylated rDNA gene loci by recruiting UBTF and the RNA polymerase Pol I transcriptional machinery. Plays a role in embryonic development and prevention of aneuploidy. Involved in melanoma cell proliferation and survival. Associates with chromatin at DNA replication fork regions. Binds to single- and double-stranded DNAs. The polypeptide is ATP-dependent DNA helicase DDX11 (Mus musculus (Mouse)).